A 321-amino-acid chain; its full sequence is Lipoyl synthase (321 aa).

[4Fe-4S] cluster is bound by residues Cys-68, Cys-73, Cys-79, Cys-94, Cys-98, Cys-101, and Ser-308. The Radical SAM core domain maps to 80-297 (FNHGTATFMI…KAEAMAMGFT (218 aa)).

Belongs to the radical SAM superfamily. Lipoyl synthase family. The cofactor is [4Fe-4S] cluster.

It localises to the cytoplasm. It catalyses the reaction [[Fe-S] cluster scaffold protein carrying a second [4Fe-4S](2+) cluster] + N(6)-octanoyl-L-lysyl-[protein] + 2 oxidized [2Fe-2S]-[ferredoxin] + 2 S-adenosyl-L-methionine + 4 H(+) = [[Fe-S] cluster scaffold protein] + N(6)-[(R)-dihydrolipoyl]-L-lysyl-[protein] + 4 Fe(3+) + 2 hydrogen sulfide + 2 5'-deoxyadenosine + 2 L-methionine + 2 reduced [2Fe-2S]-[ferredoxin]. The protein operates within protein modification; protein lipoylation via endogenous pathway; protein N(6)-(lipoyl)lysine from octanoyl-[acyl-carrier-protein]: step 2/2. Its function is as follows. Catalyzes the radical-mediated insertion of two sulfur atoms into the C-6 and C-8 positions of the octanoyl moiety bound to the lipoyl domains of lipoate-dependent enzymes, thereby converting the octanoylated domains into lipoylated derivatives. The sequence is that of Lipoyl synthase from Yersinia pseudotuberculosis serotype O:1b (strain IP 31758).